The primary structure comprises 176 residues: Japanin-like-RS (176 aa).

Residues 1 to 24 (MKVLLCLVCSFYIIVSSITTMTTG) form the signal peptide. 2 cysteine pairs are disulfide-bonded: C52/C174 and C138/C162. The N-linked (GlcNAc...) asparagine glycan is linked to N155.

It belongs to the calycin superfamily. Lipocalin family. Homodimer; non-disulfide-linked. Each monomer accommodates one molecule of cholesterol in a pocket. In terms of tissue distribution, expressed in salivary glands.

It localises to the secreted. Salivary tick protein that modulates host immune response. This protein blocks dendritic cell (DC) differentiation from monocytes. In addition, it inhibits up-regulation of costimulatory molecules and pro-inflammatory cytokines in response to stimuli and promotes up-regulation of co-inhibitory molecules and the anti-inflammatory cytokine interleukin-10. It has a pocket to accomodate cholesterol, which may have immune-modulatory roles, either directly or through interactions with the host gut microbiota. This is Japanin-like-RS from Rhipicephalus sanguineus (Brown dog tick).